We begin with the raw amino-acid sequence, 303 residues long: Acetaldehyde dehydrogenase 1 (303 aa).

The active-site Acyl-thioester intermediate is the C130. NAD(+) is bound by residues 161–169 and N272; that span reads SVGPGTRKN.

Belongs to the acetaldehyde dehydrogenase family.

The enzyme catalyses acetaldehyde + NAD(+) + CoA = acetyl-CoA + NADH + H(+). The chain is Acetaldehyde dehydrogenase 1 from Cupriavidus metallidurans (strain ATCC 43123 / DSM 2839 / NBRC 102507 / CH34) (Ralstonia metallidurans).